A 234-amino-acid polypeptide reads, in one-letter code: MAKHGKKYRAARATIDPAKRYTFQEALELATGSIFCKFDETLDIAVRLGVDPRHADQMVRGTVVLPNGLGKPVRVLVFAKGEKVKEALDAGADHAGGDELVDRIKEGWLEFDKTVATPDMMGAVGKIGKVLGPRGLMPNAKLGTVTFDLQKVVKEIKAGKVDFRVEKTGIVHAPMGKVSFGQEKLIQNISAFIDTLIRLKPTAAKGTYVRGIAISTTMGPGIQIDPLAVKTIVA.

Belongs to the universal ribosomal protein uL1 family. Part of the 50S ribosomal subunit.

In terms of biological role, binds directly to 23S rRNA. The L1 stalk is quite mobile in the ribosome, and is involved in E site tRNA release. Functionally, protein L1 is also a translational repressor protein, it controls the translation of the L11 operon by binding to its mRNA. The chain is Large ribosomal subunit protein uL1 from Syntrophobacter fumaroxidans (strain DSM 10017 / MPOB).